The sequence spans 288 residues: MSYQPQTEAATSRFLNVDEGGRTLRIHINDCGDGKETVVMLHGSGPGATGWANFSRNIDPLVEAGYRVLLLDCPGWGKSDAIVNSGSRSDLNARILKSVVDQLGIDKVHLLGNLMGGHSAVAFTLSWPERVAKLVLMGGGTGGMSLFTPMPTEGIKLLNALYREPTIENLKKMMSIFVFDTRDLTEALFEARLNNMLSRRDHLDNFVKSLEANPKQFPDFGPRLGEISAPTLIVWGRNDRFVPMDAGLRLLAGIAGSELHIYRDCGHWAQWEHADSFNQLVLNFLARA.

The active-site Proton acceptor is histidine 267.

Belongs to the AB hydrolase superfamily. MhpC family. In terms of assembly, homodimer.

It carries out the reaction (2Z,4E)-2-hydroxy-6-oxonona-2,4-dienedioate + H2O = (2Z)-2-hydroxypenta-2,4-dienoate + succinate + H(+). It catalyses the reaction (2Z,4E,7E)-2-hydroxy-6-oxonona-2,4,7-trienedioate + H2O = (2Z)-2-hydroxypenta-2,4-dienoate + fumarate + H(+). Its pathway is aromatic compound metabolism; 3-phenylpropanoate degradation. In terms of biological role, catalyzes the cleavage of the C5-C6 bond of 2-hydroxy-6-oxononadienedioate and 2-hydroxy-6-oxononatrienedioate, a dienol ring fission product of the bacterial meta-cleavage pathway for degradation of phenylpropionic acid. The chain is 2-hydroxy-6-oxononadienedioate/2-hydroxy-6-oxononatrienedioate hydrolase from Klebsiella pneumoniae subsp. pneumoniae (strain ATCC 700721 / MGH 78578).